Consider the following 422-residue polypeptide: MSEFNFISRLHNRGLISHITNEDNLSKLIENKSISLYCGFDPTEESLHIGHLLPLIMLKRFQIAGHRPIILIGGATSLIGDPSFKEKERVFNSNYNVNIWTEKITKQISCFLDFNCGKNSAVLLNNNTWFKQINILSFLRDVGKYFSVNTMINRAAVKQRITRPDQGISFTEFSYNLLQAYDFFILNQQYQVDLQIGGADQWGNISSGMHLIHRKTKRVVYGLTVPLLIQSNGIKFGKTESGTVWLDSNKTSPYKFYQFWMNIEDANVYYFLKLFTFIKVSEINKLEKNKNIKNQIINDKSLLAKHITQLVHGKEKLLAAERITKFLFLKNTTHIEESDLQQLKQDGIPFIEVSNVKDLQEALVLTSLAQSRTQAKNMIISNSISINTEKIRKNHIFHEKDKLFGKFTLLSRGKKQHSLLCW.

Position 37 (Tyr-37) interacts with L-tyrosine. A 'HIGH' region motif is present at residues 42 to 51; sequence PTEESLHIGH. Tyr-175 and Gln-179 together coordinate L-tyrosine. The 'KMSKS' region signature appears at 235 to 239; it reads KFGKT. Lys-238 is a binding site for ATP. An S4 RNA-binding domain is found at 357 to 414; that stretch reads KDLQEALVLTSLAQSRTQAKNMIISNSISINTEKIRKNHIFHEKDKLFGKFTLLSRGK.

Belongs to the class-I aminoacyl-tRNA synthetase family. TyrS type 1 subfamily. As to quaternary structure, homodimer.

It localises to the cytoplasm. It carries out the reaction tRNA(Tyr) + L-tyrosine + ATP = L-tyrosyl-tRNA(Tyr) + AMP + diphosphate + H(+). Catalyzes the attachment of tyrosine to tRNA(Tyr) in a two-step reaction: tyrosine is first activated by ATP to form Tyr-AMP and then transferred to the acceptor end of tRNA(Tyr). The polypeptide is Tyrosine--tRNA ligase (Buchnera aphidicola subsp. Acyrthosiphon pisum (strain 5A)).